The chain runs to 326 residues: uncharacterized protein (326 aa).

Glycine 28–threonine 35 serves as a coordination point for ATP.

This sequence belongs to the archaeal ATPase family.

This is an uncharacterized protein from Pyrococcus abyssi (strain GE5 / Orsay).